Consider the following 112-residue polypeptide: Protein ECM19 (112 aa).

A helical membrane pass occupies residues 35 to 57; that stretch reads NTLDMVTIGIACLVGVYTGTRFF. A disordered region spans residues 82-112; the sequence is EDGNLLKVTPSLSSTPAAPPTPPTPPTPPQQ. Positions 98–112 are enriched in pro residues; it reads AAPPTPPTPPTPPQQ.

Its subcellular location is the mitochondrion membrane. May be involved in cell wall organization and biogenesis. The chain is Protein ECM19 (ECM19) from Saccharomyces cerevisiae (strain ATCC 204508 / S288c) (Baker's yeast).